The chain runs to 62 residues: Small acidic protein 1 (62 aa).

As to quaternary structure, interacts with the COP9 signalosome. Expressed in roots, flowers, siliques, stems, leaves and seeds. In flowers, detected in petals, anthers and pistils.

Functionally, mediates responses to the synthetic auxin 2,4-dichlorophenoxyacetic acid (2,4-D). Not involved in the response to indole-3-acetic acid (IAA). Interacts with RUB modification-related components and may regulate the cullin-ring ubiquitin E3 ligase complex (CRL) activity. The sequence is that of Small acidic protein 1 (SMAP1) from Arabidopsis thaliana (Mouse-ear cress).